We begin with the raw amino-acid sequence, 209 residues long: Ribosomal RNA large subunit methyltransferase E (209 aa).

Gly-63, Trp-65, Asp-83, Asp-99, and Asp-124 together coordinate S-adenosyl-L-methionine. Lys-164 serves as the catalytic Proton acceptor.

This sequence belongs to the class I-like SAM-binding methyltransferase superfamily. RNA methyltransferase RlmE family.

The protein resides in the cytoplasm. It catalyses the reaction uridine(2552) in 23S rRNA + S-adenosyl-L-methionine = 2'-O-methyluridine(2552) in 23S rRNA + S-adenosyl-L-homocysteine + H(+). In terms of biological role, specifically methylates the uridine in position 2552 of 23S rRNA at the 2'-O position of the ribose in the fully assembled 50S ribosomal subunit. The chain is Ribosomal RNA large subunit methyltransferase E from Shewanella amazonensis (strain ATCC BAA-1098 / SB2B).